The chain runs to 426 residues: Serine--tRNA ligase (426 aa).

233-235 (TSE) serves as a coordination point for L-serine. 264 to 266 (RSE) provides a ligand contact to ATP. E287 provides a ligand contact to L-serine. Residue 351 to 354 (EISS) coordinates ATP. Residue S387 coordinates L-serine.

It belongs to the class-II aminoacyl-tRNA synthetase family. Type-1 seryl-tRNA synthetase subfamily. As to quaternary structure, homodimer. The tRNA molecule binds across the dimer.

Its subcellular location is the cytoplasm. It catalyses the reaction tRNA(Ser) + L-serine + ATP = L-seryl-tRNA(Ser) + AMP + diphosphate + H(+). The catalysed reaction is tRNA(Sec) + L-serine + ATP = L-seryl-tRNA(Sec) + AMP + diphosphate + H(+). It participates in aminoacyl-tRNA biosynthesis; selenocysteinyl-tRNA(Sec) biosynthesis; L-seryl-tRNA(Sec) from L-serine and tRNA(Sec): step 1/1. In terms of biological role, catalyzes the attachment of serine to tRNA(Ser). Is also able to aminoacylate tRNA(Sec) with serine, to form the misacylated tRNA L-seryl-tRNA(Sec), which will be further converted into selenocysteinyl-tRNA(Sec). This is Serine--tRNA ligase from Xylella fastidiosa (strain 9a5c).